The following is a 704-amino-acid chain: Elongation factor G 1 (704 aa).

In terms of domain architecture, tr-type G spans 8–285 (EKIRNIGISA…AVCAFLPNPK (278 aa)). GTP-binding positions include 17-24 (AHIDSGKT), 84-88 (DTPGH), and 138-141 (NKMD).

Belongs to the TRAFAC class translation factor GTPase superfamily. Classic translation factor GTPase family. EF-G/EF-2 subfamily.

It is found in the cytoplasm. Functionally, catalyzes the GTP-dependent ribosomal translocation step during translation elongation. During this step, the ribosome changes from the pre-translocational (PRE) to the post-translocational (POST) state as the newly formed A-site-bound peptidyl-tRNA and P-site-bound deacylated tRNA move to the P and E sites, respectively. Catalyzes the coordinated movement of the two tRNA molecules, the mRNA and conformational changes in the ribosome. This is Elongation factor G 1 from Myxococcus xanthus (strain DK1622).